The following is a 517-amino-acid chain: Probable bifunctional methylthioribulose-1-phosphate dehydratase/enolase-phosphatase E1 (517 aa).

The tract at residues 1-242 (MACSGCSCEA…CIKLYQLGID (242 aa)) is methylthioribulose-1-phosphate dehydratase. Residue Cys114 coordinates substrate. Zn(2+) is bound by residues His132 and His134. Glu157 functions as the Proton donor/acceptor; for methylthioribulose-1-phosphate dehydratase activity in the catalytic mechanism. His207 contributes to the Zn(2+) binding site. The interval 278 to 517 (VVLDIEGTTT…FRTIKSFSEI (240 aa)) is enolase-phosphatase E1. Mg(2+)-binding residues include Asp281 and Glu283. Substrate is bound by residues 416–417 (SS) and Lys450. Asp476 is a binding site for Mg(2+).

In the N-terminal section; belongs to the aldolase class II family. MtnB subfamily. It in the C-terminal section; belongs to the HAD-like hydrolase superfamily. MasA/MtnC family. The cofactor is Zn(2+). It depends on Mg(2+) as a cofactor.

The enzyme catalyses 5-(methylsulfanyl)-D-ribulose 1-phosphate = 5-methylsulfanyl-2,3-dioxopentyl phosphate + H2O. It catalyses the reaction 5-methylsulfanyl-2,3-dioxopentyl phosphate + H2O = 1,2-dihydroxy-5-(methylsulfanyl)pent-1-en-3-one + phosphate. Its pathway is amino-acid biosynthesis; L-methionine biosynthesis via salvage pathway; L-methionine from S-methyl-5-thio-alpha-D-ribose 1-phosphate: step 2/6. It functions in the pathway amino-acid biosynthesis; L-methionine biosynthesis via salvage pathway; L-methionine from S-methyl-5-thio-alpha-D-ribose 1-phosphate: step 3/6. The protein operates within amino-acid biosynthesis; L-methionine biosynthesis via salvage pathway; L-methionine from S-methyl-5-thio-alpha-D-ribose 1-phosphate: step 4/6. The polypeptide is Probable bifunctional methylthioribulose-1-phosphate dehydratase/enolase-phosphatase E1 (Zea mays (Maize)).